A 149-amino-acid chain; its full sequence is Large ribosomal subunit protein bL9 (149 aa).

Residue K89 is modified to N6-acetyllysine.

The protein belongs to the bacterial ribosomal protein bL9 family.

Its function is as follows. Binds to the 23S rRNA. The polypeptide is Large ribosomal subunit protein bL9 (Shigella boydii serotype 18 (strain CDC 3083-94 / BS512)).